Here is a 557-residue protein sequence, read N- to C-terminus: T-complex protein 1 subunit theta-like 2 (557 aa).

Disordered regions lie at residues 1–33 (MDST…EPHL) and 531–557 (EIWN…GLNN).

It belongs to the TCP-1 chaperonin family.

It localises to the cytoplasm. Possible molecular chaperone; assists the folding of proteins upon ATP hydrolysis. The polypeptide is T-complex protein 1 subunit theta-like 2 (CCT8L2) (Homo sapiens (Human)).